The chain runs to 142 residues: Large ribosomal subunit protein uL13 (142 aa).

Belongs to the universal ribosomal protein uL13 family. In terms of assembly, part of the 50S ribosomal subunit.

Functionally, this protein is one of the early assembly proteins of the 50S ribosomal subunit, although it is not seen to bind rRNA by itself. It is important during the early stages of 50S assembly. The sequence is that of Large ribosomal subunit protein uL13 from Pseudomonas paraeruginosa (strain DSM 24068 / PA7) (Pseudomonas aeruginosa (strain PA7)).